The sequence spans 110 residues: Small EDRK-rich factor 1 (110 aa).

Residues 1 to 30 are compositionally biased toward basic and acidic residues; that stretch reads MARGNQRELARQKNMKKTQEISKGKRKEDS. The tract at residues 1-61 is disordered; that stretch reads MARGNQRELA…GPHLPLKAPR (61 aa). A required for SNCA binding region spans residues 11–17; the sequence is RQKNMKK. Positions 34–50 are enriched in low complexity; it reads SQRKQSSGGQKSESKMS.

Belongs to the SERF family. Interacts with SNCA; this interaction promotes the aggregation of SNCA. As to expression, isoform Long is predominantly expressed in heart, brain and skeletal muscle. Isoform Short and Isoform Long are expressed throughout the central nervous system, including spinal cord.

The protein localises to the cytoplasm. It localises to the cytosol. Its subcellular location is the nucleus. In terms of biological role, positive regulator of amyloid protein aggregation and proteotoxicity. Induces conformational changes in amyloid proteins, such as APP, HTT, and SNCA, driving them into compact formations preceding the formation of aggregates. This is Small EDRK-rich factor 1 (SERF1A) from Homo sapiens (Human).